The chain runs to 366 residues: Chorismate synthase (366 aa).

Residues Arg-48 and Arg-54 each coordinate NADP(+). FMN contacts are provided by residues 125-127, 238-239, Gly-278, 293-297, and Arg-319; these read RSS, NA, and KPTSS.

It belongs to the chorismate synthase family. In terms of assembly, homotetramer. FMNH2 serves as cofactor.

It catalyses the reaction 5-O-(1-carboxyvinyl)-3-phosphoshikimate = chorismate + phosphate. It functions in the pathway metabolic intermediate biosynthesis; chorismate biosynthesis; chorismate from D-erythrose 4-phosphate and phosphoenolpyruvate: step 7/7. Its function is as follows. Catalyzes the anti-1,4-elimination of the C-3 phosphate and the C-6 proR hydrogen from 5-enolpyruvylshikimate-3-phosphate (EPSP) to yield chorismate, which is the branch point compound that serves as the starting substrate for the three terminal pathways of aromatic amino acid biosynthesis. This reaction introduces a second double bond into the aromatic ring system. This chain is Chorismate synthase, found in Neisseria gonorrhoeae (strain ATCC 700825 / FA 1090).